The following is a 410-amino-acid chain: Serine hydroxymethyltransferase (410 aa).

(6S)-5,6,7,8-tetrahydrofolate is bound by residues Leu119 and 123–125 (GHL). An N6-(pyridoxal phosphate)lysine modification is found at Lys228. 351-353 (SPF) contacts (6S)-5,6,7,8-tetrahydrofolate.

It belongs to the SHMT family. As to quaternary structure, homodimer. Pyridoxal 5'-phosphate is required as a cofactor.

Its subcellular location is the cytoplasm. The catalysed reaction is (6R)-5,10-methylene-5,6,7,8-tetrahydrofolate + glycine + H2O = (6S)-5,6,7,8-tetrahydrofolate + L-serine. It participates in one-carbon metabolism; tetrahydrofolate interconversion. The protein operates within amino-acid biosynthesis; glycine biosynthesis; glycine from L-serine: step 1/1. Its function is as follows. Catalyzes the reversible interconversion of serine and glycine with tetrahydrofolate (THF) serving as the one-carbon carrier. This reaction serves as the major source of one-carbon groups required for the biosynthesis of purines, thymidylate, methionine, and other important biomolecules. Also exhibits THF-independent aldolase activity toward beta-hydroxyamino acids, producing glycine and aldehydes, via a retro-aldol mechanism. This Alkaliphilus oremlandii (strain OhILAs) (Clostridium oremlandii (strain OhILAs)) protein is Serine hydroxymethyltransferase.